We begin with the raw amino-acid sequence, 622 residues long: Telomerase-associated protein of 75 kDa (622 aa).

In terms of assembly, component of the telomerase holoenzyme complex, composed of the catalytic core (the catalytic subunit TERT, the telomerase RNA template component TER and TAP65/p65), which is associated with two heterotrimeric subcomplexes: (i) the replication protein A (RPA)-related subcomplex, composed of TEB1, RPA2/TEB2 and RPA3/TEB3 and (ii) the CST-like subcomplex, composed of TAP75/p75, TAP45/p45 and TAP19/p19. TEB1 and the CST-like subcomplex are tethered to the catalytic core by TAP50/p50.

It is found in the chromosome. The protein localises to the telomere. In terms of biological role, component of a CST-like subcomplex of the holoenzyme telomerase ribonucleoprotein complex, which stimulates telomerase complementary-strand synthesis. Telomerase is an essential ribonucleoprotein enzyme that copies new telomeric repeats onto chromosome ends by repetitively synthesizing the short telomere-repeat sequence 5'-TTGGGG-3' using an RNA template component TER. The CST-like subcomplex (also named 7-4-1) binds telomeric single-stranded DNA and coordinates telomere G-strand and C-strand synthesis. This chain is Telomerase-associated protein of 75 kDa, found in Tetrahymena thermophila (strain SB210).